A 132-amino-acid polypeptide reads, in one-letter code: UPF0102 protein Acel_1550 (132 aa).

The protein belongs to the UPF0102 family.

The chain is UPF0102 protein Acel_1550 from Acidothermus cellulolyticus (strain ATCC 43068 / DSM 8971 / 11B).